The sequence spans 345 residues: Dihydroorotate dehydrogenase (quinone) (345 aa).

Residues 65–69 (AGLDK) and threonine 89 each bind FMN. Lysine 69 contributes to the substrate binding site. 114–118 (NRMGF) is a substrate binding site. FMN is bound by residues asparagine 142 and asparagine 175. Position 175 (asparagine 175) interacts with substrate. The active-site Nucleophile is serine 178. Asparagine 180 contacts substrate. FMN is bound by residues lysine 220 and threonine 248. Residue 249–250 (NT) participates in substrate binding. Residues glycine 271, glycine 300, and 321–322 (YT) each bind FMN.

Belongs to the dihydroorotate dehydrogenase family. Type 2 subfamily. In terms of assembly, monomer. FMN serves as cofactor.

Its subcellular location is the cell membrane. It carries out the reaction (S)-dihydroorotate + a quinone = orotate + a quinol. It participates in pyrimidine metabolism; UMP biosynthesis via de novo pathway; orotate from (S)-dihydroorotate (quinone route): step 1/1. Functionally, catalyzes the conversion of dihydroorotate to orotate with quinone as electron acceptor. The chain is Dihydroorotate dehydrogenase (quinone) from Burkholderia lata (strain ATCC 17760 / DSM 23089 / LMG 22485 / NCIMB 9086 / R18194 / 383).